We begin with the raw amino-acid sequence, 895 residues long: Catenin alpha-3 (895 aa).

Position 56 is a phosphoserine (Ser-56). Residues 74-111 are a coiled coil; sequence EKIAQEATVLKDELTASLEEVRKESEALKVSAERFTDD. Position 160 is a phosphoserine (Ser-160). Positions 325–379 form a coiled coil; the sequence is RERIIAECNAIRQALQDLLSEYMNNAGKKERSNTLNIALDNMCKKTRDLRRQLRK. A phosphoserine mark is found at Ser-637 and Ser-647. Thr-649 carries the post-translational modification Phosphothreonine.

Belongs to the vinculin/alpha-catenin family. Interacts with CTNNB1. Interacts with PKP2. Predominantly expressed in heart and testis. Expressed at lower levels in brain, kidney, liver and skeletal muscle.

The protein localises to the cytoplasm. It localises to the cytoskeleton. It is found in the cell junction. The protein resides in the desmosome. May be involved in formation of stretch-resistant cell-cell adhesion complexes. In Homo sapiens (Human), this protein is Catenin alpha-3.